A 342-amino-acid polypeptide reads, in one-letter code: N-acetyl-gamma-glutamyl-phosphate reductase (342 aa).

Cysteine 149 is an active-site residue.

The protein belongs to the NAGSA dehydrogenase family. Type 1 subfamily.

The protein localises to the cytoplasm. The catalysed reaction is N-acetyl-L-glutamate 5-semialdehyde + phosphate + NADP(+) = N-acetyl-L-glutamyl 5-phosphate + NADPH + H(+). It functions in the pathway amino-acid biosynthesis; L-arginine biosynthesis; N(2)-acetyl-L-ornithine from L-glutamate: step 3/4. Catalyzes the NADPH-dependent reduction of N-acetyl-5-glutamyl phosphate to yield N-acetyl-L-glutamate 5-semialdehyde. This chain is N-acetyl-gamma-glutamyl-phosphate reductase, found in Cereibacter sphaeroides (strain ATCC 17029 / ATH 2.4.9) (Rhodobacter sphaeroides).